The sequence spans 340 residues: Cytoskeleton protein RodZ (340 aa).

Over 1–111 (MNTEATQEKS…LGKQRKKRDG (111 aa)) the chain is Cytoplasmic. The 61-residue stretch at 19-79 (LRTAREQMGL…RLVHVPEEEL (61 aa)) folds into the HTH cro/C1-type domain. A DNA-binding region (H-T-H motif) is located at residues 30-49 (QQNVAERLCLKLSTIRDIEE). A helical; Signal-anchor for type II membrane protein transmembrane segment spans residues 112–132 (WLMIFTWLVLFVVLGLTGAWW). At 133 to 340 (WQNHKAAQDD…QVARLTVGAP (208 aa)) the chain is on the periplasmic side. The segment at 162–252 (ALSDDNANGG…AAPLPTGSAA (91 aa)) is disordered. Positions 183–201 (ATANNAPSSVTATSDNGTP) are enriched in polar residues. Over residues 202–233 (AATAQSSQVTASNAAPAANAVNDNTPPVAVAP) the composition is skewed to low complexity.

This sequence belongs to the RodZ family.

Its subcellular location is the cell inner membrane. Cytoskeletal protein that is involved in cell-shape control through regulation of the length of the long axis. The sequence is that of Cytoskeleton protein RodZ from Erwinia tasmaniensis (strain DSM 17950 / CFBP 7177 / CIP 109463 / NCPPB 4357 / Et1/99).